The following is an 877-amino-acid chain: Phosphoenolpyruvate carboxylase (877 aa).

Catalysis depends on residues His138 and Lys543.

The protein belongs to the PEPCase type 1 family. Requires Mg(2+) as cofactor.

The catalysed reaction is oxaloacetate + phosphate = phosphoenolpyruvate + hydrogencarbonate. Functionally, forms oxaloacetate, a four-carbon dicarboxylic acid source for the tricarboxylic acid cycle. The chain is Phosphoenolpyruvate carboxylase from Aeromonas hydrophila subsp. hydrophila (strain ATCC 7966 / DSM 30187 / BCRC 13018 / CCUG 14551 / JCM 1027 / KCTC 2358 / NCIMB 9240 / NCTC 8049).